Here is an 858-residue protein sequence, read N- to C-terminus: Heat shock protein 105 kDa (858 aa).

Ser-2 bears the N-acetylserine mark. At Lys-471 the chain carries N6-acetyllysine. Disordered regions lie at residues 500–585 (KVPT…PPEA) and 801–858 (VNQP…MDLD). A compositionally biased stretch (acidic residues) spans 504 to 515 (EEDDGSSVEADM). Phosphoserine is present on residues Ser-509 and Ser-510. Residues 533–549 (QQDNSEAGTQPQVQTDG) show a composition bias toward polar residues. At Ser-558 the chain carries Phosphoserine. Composition is skewed to basic and acidic residues over residues 564–585 (EENK…PPEA) and 806–815 (PKIESPKLER). Residue Ser-810 is modified to Phosphoserine. Residue Thr-816 is modified to Phosphothreonine. The span at 822-834 (LDKKEDLEGKDNF) shows a compositional bias: basic and acidic residues.

It belongs to the heat shock protein 70 family. In terms of assembly, interacts with HSPA8/HSC70. Interacts with HSPA1A (via NBD) and HSPA1B (via NBD). Phosphorylation on Ser-509 may be important for regulation of the HSPA8/HSC70 chaperone activity. Predominantly expressed in the brain and also found in the liver.

The protein localises to the cytoplasm. Its function is as follows. Acts as a nucleotide-exchange factor (NEF) for chaperone proteins HSPA1A and HSPA1B, promoting the release of ADP from HSPA1A/B thereby triggering substrate release. Prevents the aggregation of denatured proteins in cells under severe stress, on which the ATP levels decrease markedly. Inhibits HSPA8/HSC70 ATPase and chaperone activities. In Cricetulus griseus (Chinese hamster), this protein is Heat shock protein 105 kDa (HSPH1).